The sequence spans 67 residues: Photosystem II reaction center protein H (67 aa).

Residues 27-47 (GAVPVMAFVGVLLLVFLVILL) form a helical membrane-spanning segment.

Belongs to the PsbH family. As to quaternary structure, PSII is composed of 1 copy each of membrane proteins PsbA, PsbB, PsbC, PsbD, PsbE, PsbF, PsbH, PsbI, PsbJ, PsbK, PsbL, PsbM, PsbT, PsbX, PsbY, Psb30/Ycf12, peripheral proteins PsbO, CyanoQ (PsbQ), PsbU, PsbV and a large number of cofactors. It forms dimeric complexes.

It localises to the cellular thylakoid membrane. Its function is as follows. One of the components of the core complex of photosystem II (PSII), required for its stability and/or assembly. PSII is a light-driven water:plastoquinone oxidoreductase that uses light energy to abstract electrons from H(2)O, generating O(2) and a proton gradient subsequently used for ATP formation. It consists of a core antenna complex that captures photons, and an electron transfer chain that converts photonic excitation into a charge separation. In Prochlorococcus marinus (strain SARG / CCMP1375 / SS120), this protein is Photosystem II reaction center protein H.